Here is a 251-residue protein sequence, read N- to C-terminus: Ubiquinone/menaquinone biosynthesis C-methyltransferase UbiE (251 aa).

S-adenosyl-L-methionine is bound by residues T74, D95, and 123–124; that span reads DA.

This sequence belongs to the class I-like SAM-binding methyltransferase superfamily. MenG/UbiE family.

It catalyses the reaction a 2-demethylmenaquinol + S-adenosyl-L-methionine = a menaquinol + S-adenosyl-L-homocysteine + H(+). It carries out the reaction a 2-methoxy-6-(all-trans-polyprenyl)benzene-1,4-diol + S-adenosyl-L-methionine = a 5-methoxy-2-methyl-3-(all-trans-polyprenyl)benzene-1,4-diol + S-adenosyl-L-homocysteine + H(+). It participates in quinol/quinone metabolism; menaquinone biosynthesis; menaquinol from 1,4-dihydroxy-2-naphthoate: step 2/2. Its pathway is cofactor biosynthesis; ubiquinone biosynthesis. Methyltransferase required for the conversion of demethylmenaquinol (DMKH2) to menaquinol (MKH2) and the conversion of 2-polyprenyl-6-methoxy-1,4-benzoquinol (DDMQH2) to 2-polyprenyl-3-methyl-6-methoxy-1,4-benzoquinol (DMQH2). The polypeptide is Ubiquinone/menaquinone biosynthesis C-methyltransferase UbiE (Idiomarina loihiensis (strain ATCC BAA-735 / DSM 15497 / L2-TR)).